The sequence spans 116 residues: Host transcription reprogramming factor 4 (116 aa).

The N-terminal stretch at Met-1–Gly-24 is a signal peptide. Residues Gly-24–Arg-53 are disordered. The span at Val-33–Pro-47 shows a compositional bias: polar residues. A C2H2-type; degenerate zinc finger spans residues Phe-74–Phe-96.

The protein resides in the secreted. It is found in the host nucleus. Probable secreted effector that translocates into the nuclei of host cells to reprogram the expression of targeted genes by binding on effector binding elements in rice. This is Host transcription reprogramming factor 4 from Pyricularia oryzae (strain 70-15 / ATCC MYA-4617 / FGSC 8958) (Rice blast fungus).